The chain runs to 575 residues: Envelope glycoprotein (575 aa).

The first 19 residues, 1–19 (MLCILILLLHPRLCPVTKG), serve as a signal peptide directing secretion. Topologically, residues 20 to 517 (GLGKPSGDIY…LTGLNGLLPY (498 aa)) are extracellular. 2 N-linked (GlcNAc...) asparagine; by host glycosylation sites follow: Asn-126 and Asn-239. Residues 249–252 (CWLC) carry the CXXC motif. Disulfide bonds link Cys-249/Cys-252, Cys-249/Cys-475, and Cys-467/Cys-474. N-linked (GlcNAc...) asparagine; by host glycosylation is found at Asn-266, Asn-271, Asn-302, Asn-316, Asn-322, and Asn-349. The segment at 390 to 410 (LIPLLVGLGVSTAVATGTAGL) is fusion peptide. 2 coiled-coil regions span residues 411–461 (GVAV…LLTA) and 471–507 (QERC…DNLF). The segment at 450–466 (LQNRRGLDLLTAEQGGI) is immunosuppression. The short motif at 467 to 475 (CLALQERCC) is the CX6CC element. A glycan (N-linked (GlcNAc...) asparagine; by host) is linked at Asn-479. A helical membrane pass occupies residues 518–538 (LLPFLGPLFAIILFFSFAPWI). Over 539–575 (LRRVTALIRDQLNSLLGKPIQIHYHQLATRDLEYGRL) the chain is Cytoplasmic. Positions 562-565 (YHQL) match the YXXL motif; contains endocytosis signal motif.

In terms of assembly, the mature envelope protein (Env) consists of a trimer of SU-TM heterodimers attached by a labile interchain disulfide bond. Post-translationally, specific enzymatic cleavages in vivo yield mature proteins. Envelope glycoproteins are synthesized as an inactive precursor that is N-glycosylated and processed likely by host cell furin or by a furin-like protease in the Golgi to yield the mature SU and TM proteins. The cleavage site between SU and TM requires the minimal sequence [KR]-X-[KR]-R. The CXXC motif is highly conserved across a broad range of retroviral envelope proteins. It is thought to participate in the formation of a labile disulfide bond possibly with the CX6CC motif present in the transmembrane protein. Isomerization of the intersubunit disulfide bond to an SU intrachain disulfide bond is thought to occur upon receptor recognition in order to allow membrane fusion.

Its subcellular location is the virion membrane. It is found in the host cell membrane. The surface protein (SU) attaches the virus to the host cell by binding to its receptor. This interaction triggers the refolding of the transmembrane protein (TM) and is thought to activate its fusogenic potential by unmasking its fusion peptide. Fusion occurs at the host cell plasma membrane. In terms of biological role, the transmembrane protein (TM) acts as a class I viral fusion protein. Under the current model, the protein has at least 3 conformational states: pre-fusion native state, pre-hairpin intermediate state, and post-fusion hairpin state. During viral and target cell membrane fusion, the coiled coil regions (heptad repeats) assume a trimer-of-hairpins structure, positioning the fusion peptide in close proximity to the C-terminal region of the ectodomain. The formation of this structure appears to drive apposition and subsequent fusion of viral and target cell membranes. Membranes fusion leads to delivery of the nucleocapsid into the cytoplasm. In Squirrel monkey retrovirus (SMRV-H), this protein is Envelope glycoprotein (env).